A 330-amino-acid chain; its full sequence is Aspartate--ammonia ligase (330 aa).

Belongs to the class-II aminoacyl-tRNA synthetase family. AsnA subfamily. Homodimer.

The protein localises to the cytoplasm. The enzyme catalyses L-aspartate + NH4(+) + ATP = L-asparagine + AMP + diphosphate + H(+). Its pathway is amino-acid biosynthesis; L-asparagine biosynthesis; L-asparagine from L-aspartate (ammonia route): step 1/1. The sequence is that of Aspartate--ammonia ligase from Salmonella typhi.